The following is a 438-amino-acid chain: Na(+)/H(+) antiporter NhaA (438 aa).

Helical transmembrane passes span 23–43 (FGGI…NSFL), 62–82 (FFIG…LFFL), 104–124 (SFPV…YFFL), 133–153 (GFGI…MLLG), 162–182 (VFLI…IALF), 185–205 (TNLK…LAIL), 212–232 (SLIP…QSGI), 302–322 (FLAP…NAGV), 337–357 (LGVI…ITFI), 372–392 (WWHI…SMFI), and 410–430 (IAIL…LFAL).

Belongs to the NhaA Na(+)/H(+) (TC 2.A.33) antiporter family.

Its subcellular location is the cell inner membrane. The enzyme catalyses Na(+)(in) + 2 H(+)(out) = Na(+)(out) + 2 H(+)(in). Na(+)/H(+) antiporter that extrudes sodium in exchange for external protons. The polypeptide is Na(+)/H(+) antiporter NhaA (Helicobacter pylori (strain J99 / ATCC 700824) (Campylobacter pylori J99)).